Consider the following 205-residue polypeptide: Outer-membrane lipoprotein carrier protein (205 aa).

The signal sequence occupies residues Met-1–Ala-22.

The protein belongs to the LolA family. Monomer.

It is found in the periplasm. Its function is as follows. Participates in the translocation of lipoproteins from the inner membrane to the outer membrane. Only forms a complex with a lipoprotein if the residue after the N-terminal Cys is not an aspartate (The Asp acts as a targeting signal to indicate that the lipoprotein should stay in the inner membrane). This is Outer-membrane lipoprotein carrier protein from Haemophilus influenzae (strain PittEE).